Here is a 648-residue protein sequence, read N- to C-terminus: Translation factor GUF1 homolog, mitochondrial (648 aa).

Positions 55–247 (ERVRNFSIIA…AVIERIPSPP (193 aa)) constitute a tr-type G domain. GTP is bound by residues 64–71 (AHVDHGKS), 140–144 (DTPGH), and 194–197 (NKID).

Belongs to the TRAFAC class translation factor GTPase superfamily. Classic translation factor GTPase family. LepA subfamily.

Its subcellular location is the mitochondrion inner membrane. The enzyme catalyses GTP + H2O = GDP + phosphate + H(+). Functionally, promotes mitochondrial protein synthesis. May act as a fidelity factor of the translation reaction, by catalyzing a one-codon backward translocation of tRNAs on improperly translocated ribosomes. Binds to mitochondrial ribosomes in a GTP-dependent manner. In Oryza sativa subsp. indica (Rice), this protein is Translation factor GUF1 homolog, mitochondrial.